Consider the following 901-residue polypeptide: Core protein VP3 (901 aa).

The protein belongs to the orbivirus VP3 family.

Its subcellular location is the virion. The VP3 protein is one of the five proteins (with VP1, VP4, VP6 and VP7) which form the inner capsid of the virus. This chain is Core protein VP3 (Segment-3), found in Bluetongue virus 1 (isolate South Africa) (BTV 1).